The following is a 432-amino-acid chain: Adenylosuccinate synthetase (432 aa).

Residues 13–19 (GDEGKGK) and 41–43 (GHT) each bind GTP. Asp14 (proton acceptor) is an active-site residue. Asp14 and Gly41 together coordinate Mg(2+). IMP is bound by residues 14–17 (DEGK), 39–42 (NAGH), Thr130, Arg144, Gln225, Thr240, and Arg304. The active-site Proton donor is His42. 300–306 (ATTGRPR) contributes to the substrate binding site. Residues Arg306, 332–334 (KLD), and 415–417 (STG) each bind GTP.

It belongs to the adenylosuccinate synthetase family. As to quaternary structure, homodimer. Mg(2+) is required as a cofactor.

Its subcellular location is the cytoplasm. It catalyses the reaction IMP + L-aspartate + GTP = N(6)-(1,2-dicarboxyethyl)-AMP + GDP + phosphate + 2 H(+). It functions in the pathway purine metabolism; AMP biosynthesis via de novo pathway; AMP from IMP: step 1/2. Functionally, plays an important role in the de novo pathway of purine nucleotide biosynthesis. Catalyzes the first committed step in the biosynthesis of AMP from IMP. The polypeptide is Adenylosuccinate synthetase (Hahella chejuensis (strain KCTC 2396)).